A 411-amino-acid chain; its full sequence is S-inosyl-L-homocysteine hydrolase (411 aa).

Aspartate 121 and glutamate 146 together coordinate substrate. 147-149 (TTT) contributes to the NAD(+) binding site. Lysine 176 and aspartate 180 together coordinate substrate. NAD(+) is bound by residues asparagine 181, 210–215 (GYGWCG), glutamate 233, asparagine 268, 289–291 (SGH), and asparagine 335.

Belongs to the adenosylhomocysteinase family. It depends on NAD(+) as a cofactor.

It localises to the cytoplasm. The enzyme catalyses S-inosyl-L-homocysteine + H2O = L-homocysteine + inosine. It functions in the pathway amino-acid biosynthesis; S-adenosyl-L-methionine biosynthesis. Catalyzes the hydrolysis of S-inosyl-L-homocysteine (SIH) to L-homocysteine (Hcy) and inosine. Likely functions in a S-adenosyl-L-methionine (SAM) recycling pathway from S-adenosyl-L-homocysteine (SAH) produced from SAM-dependent methylation reactions. Can also catalyze the reverse reaction in vitro, i.e. the synthesis of SIH from Hcy and inosine. The chain is S-inosyl-L-homocysteine hydrolase from Methanosarcina acetivorans (strain ATCC 35395 / DSM 2834 / JCM 12185 / C2A).